The primary structure comprises 284 residues: Tropomyosin (284 aa).

A coiled-coil region spans residues M1–N284.

Belongs to the tropomyosin family. In terms of assembly, homodimer.

In terms of biological role, tropomyosin, in association with the troponin complex, plays a central role in the calcium dependent regulation of muscle contraction. The protein is Tropomyosin of Periplaneta fuliginosa (Smokybrown cockroach).